Consider the following 114-residue polypeptide: Iron-sulfur cluster insertion protein ErpA (114 aa).

3 residues coordinate iron-sulfur cluster: Cys42, Cys106, and Cys108.

It belongs to the HesB/IscA family. As to quaternary structure, homodimer. Iron-sulfur cluster serves as cofactor.

Required for insertion of 4Fe-4S clusters for at least IspG. The sequence is that of Iron-sulfur cluster insertion protein ErpA from Buchnera aphidicola subsp. Acyrthosiphon pisum (strain APS) (Acyrthosiphon pisum symbiotic bacterium).